The chain runs to 482 residues: ATP-dependent rRNA helicase rrp3 (482 aa).

Residues 1–55 form a disordered region; the sequence is MSSVKRRKTEKNTSSGLKSKQAKEPKEASPLSSPEPTEENQNNEIEEGTEEEEVT. Positions 44 to 53 are enriched in acidic residues; that stretch reads EIEEGTEEEE. The short motif at 56-84 is the Q motif element; it reads KSFKDLGIVDSLCEACDTLGYKAPTPIQR. The 172-residue stretch at 87-258 folds into the Helicase ATP-binding domain; the sequence is IPLALQGRDL…RASLKDPLRV (172 aa). Residue 100 to 107 participates in ATP binding; sequence AETGSGKT. The short motif at 206–209 is the DEAD box element; the sequence is DEAD. The Helicase C-terminal domain maps to 282–430; the sequence is HKDTYLIYLL…EYQTVKDEVM (149 aa). Composition is skewed to basic and acidic residues over residues 444–456 and 472–482; these read RNEM…DRGK and RGRDEMDREEG. Residues 444–482 are disordered; sequence RNEMKNLHEDRGKKGAVLKGRRPANGAKRGRDEMDREEG.

The protein belongs to the DEAD box helicase family. DDX47/RRP3 subfamily. Interacts with the SSU processome.

The protein resides in the nucleus. It carries out the reaction ATP + H2O = ADP + phosphate + H(+). Its function is as follows. ATP-dependent rRNA helicase required for pre-ribosomal RNA processing. Involved in the maturation of the 35S-pre-rRNA and to its cleavage to mature 18S rRNA. The protein is ATP-dependent rRNA helicase rrp3 of Sclerotinia sclerotiorum (strain ATCC 18683 / 1980 / Ss-1) (White mold).